The following is a 294-amino-acid chain: uncharacterized protein (294 aa).

Its subcellular location is the mitochondrion. This is an uncharacterized protein from Zea mays (Maize).